A 268-amino-acid polypeptide reads, in one-letter code: Tryptophan synthase alpha chain (268 aa).

Active-site proton acceptor residues include glutamate 49 and aspartate 60.

It belongs to the TrpA family. As to quaternary structure, tetramer of two alpha and two beta chains.

The catalysed reaction is (1S,2R)-1-C-(indol-3-yl)glycerol 3-phosphate + L-serine = D-glyceraldehyde 3-phosphate + L-tryptophan + H2O. It functions in the pathway amino-acid biosynthesis; L-tryptophan biosynthesis; L-tryptophan from chorismate: step 5/5. Functionally, the alpha subunit is responsible for the aldol cleavage of indoleglycerol phosphate to indole and glyceraldehyde 3-phosphate. This is Tryptophan synthase alpha chain from Vibrio metschnikovii.